Here is a 337-residue protein sequence, read N- to C-terminus: uncharacterized protein (337 aa).

The 49-residue stretch at 12–60 (SLNYVDLPDTVHRKIFEYLNPWEIFKLSRISKAIHVTILKNKKFAVKDI) folds into the F-box domain.

This is an uncharacterized protein from Caenorhabditis elegans.